Reading from the N-terminus, the 374-residue chain is UPF0754 membrane protein NWMN_1738 (374 aa).

2 helical membrane passes run 4–24 (LFII…TNVI) and 354–374 (SLGF…AIFV).

This sequence belongs to the UPF0754 family.

The protein resides in the cell membrane. In Staphylococcus aureus (strain Newman), this protein is UPF0754 membrane protein NWMN_1738.